The chain runs to 577 residues: Arginine--tRNA ligase (577 aa).

Positions 122 to 132 (PNVAKEMHVGH) match the 'HIGH' region motif.

Belongs to the class-I aminoacyl-tRNA synthetase family. In terms of assembly, monomer.

It localises to the cytoplasm. The catalysed reaction is tRNA(Arg) + L-arginine + ATP = L-arginyl-tRNA(Arg) + AMP + diphosphate. The chain is Arginine--tRNA ligase from Aliivibrio fischeri (strain ATCC 700601 / ES114) (Vibrio fischeri).